Reading from the N-terminus, the 311-residue chain is Glutamyl-Q tRNA(Asp) synthetase (311 aa).

L-glutamate-binding positions include 14–18 (RYAPS) and E50. Positions 17–27 (PSPSGDLHLGN) match the 'HIGH' region motif. C104, C106, Y125, and C129 together coordinate Zn(2+). Positions 186 and 204 each coordinate L-glutamate. The 'KMSKS' region signature appears at 242–246 (RLAKR). K245 lines the ATP pocket.

The protein belongs to the class-I aminoacyl-tRNA synthetase family. GluQ subfamily. Zn(2+) serves as cofactor.

Functionally, catalyzes the tRNA-independent activation of glutamate in presence of ATP and the subsequent transfer of glutamate onto a tRNA(Asp). Glutamate is transferred on the 2-amino-5-(4,5-dihydroxy-2-cyclopenten-1-yl) moiety of the queuosine in the wobble position of the QUC anticodon. The protein is Glutamyl-Q tRNA(Asp) synthetase of Nocardia farcinica (strain IFM 10152).